Here is a 159-residue protein sequence, read N- to C-terminus: Capsid protein (159 aa).

It belongs to the virgaviridae capsid protein family.

The protein localises to the virion. Capsid protein self-assembles to form rod-shaped virions about 18 nm in diameter with a central canal enclosing the viral genomic RNA. This is Capsid protein (CP) from Tobacco mild green mosaic virus (TMGMV).